A 330-amino-acid chain; its full sequence is Trans-1,2-dihydrobenzene-1,2-diol dehydrogenase (330 aa).

This sequence belongs to the Gfo/Idh/MocA family. Homodimer.

It catalyses the reaction (1R,2R)-1,2-dihydrobenzene-1,2-diol + NADP(+) = catechol + NADPH + H(+). The catalysed reaction is D-xylose + NADP(+) = D-xylono-1,5-lactone + NADPH + H(+). The chain is Trans-1,2-dihydrobenzene-1,2-diol dehydrogenase (dhdh) from Xenopus laevis (African clawed frog).